A 134-amino-acid chain; its full sequence is Putative thioredoxin 2 (134 aa).

Positions 3–106 constitute a Thioredoxin domain; it reads STVELTKENF…LTDVIGQARK (104 aa). An intrachain disulfide couples C31 to C34. Residues 115–134 are disordered; sequence AVAEQQAQAGQNGQEGQEGQ. Positions 117-134 are enriched in low complexity; the sequence is AEQQAQAGQNGQEGQEGQ.

Belongs to the thioredoxin family.

The protein resides in the cytoplasm. Its function is as follows. Component of the thioredoxin-thioredoxin reductase system. Participates in various redox reactions through the reversible oxidation of its active center dithiol to a disulfide and catalyzes dithiol-disulfide exchange reactions. This chain is Putative thioredoxin 2 (trxC), found in Streptomyces coelicolor (strain ATCC BAA-471 / A3(2) / M145).